The chain runs to 266 residues: Methionine aminopeptidase 1 (266 aa).

Residue His-88 participates in substrate binding. The a divalent metal cation site is built by Asp-106, Asp-117, and His-186. Residue His-193 participates in substrate binding. A divalent metal cation-binding residues include Glu-219 and Glu-250.

This sequence belongs to the peptidase M24A family. Methionine aminopeptidase type 1 subfamily. Monomer. The cofactor is Co(2+). Zn(2+) serves as cofactor. Mn(2+) is required as a cofactor. Requires Fe(2+) as cofactor.

The enzyme catalyses Release of N-terminal amino acids, preferentially methionine, from peptides and arylamides.. Its function is as follows. Removes the N-terminal methionine from nascent proteins. The N-terminal methionine is often cleaved when the second residue in the primary sequence is small and uncharged (Met-Ala-, Cys, Gly, Pro, Ser, Thr, or Val). Requires deformylation of the N(alpha)-formylated initiator methionine before it can be hydrolyzed. The sequence is that of Methionine aminopeptidase 1 from Mycobacterium tuberculosis (strain CDC 1551 / Oshkosh).